We begin with the raw amino-acid sequence, 92 residues long: PqqA binding protein (92 aa).

This sequence belongs to the PqqD family. Monomer. Interacts with PqqE.

Its pathway is cofactor biosynthesis; pyrroloquinoline quinone biosynthesis. Functions as a PqqA binding protein and presents PqqA to PqqE, in the pyrroloquinoline quinone (PQQ) biosynthetic pathway. The chain is PqqA binding protein from Xanthomonas axonopodis pv. citri (strain 306).